Consider the following 104-residue polypeptide: Integration host factor subunit beta (104 aa).

The protein belongs to the bacterial histone-like protein family. In terms of assembly, heterodimer of an alpha and a beta chain.

This protein is one of the two subunits of integration host factor, a specific DNA-binding protein that functions in genetic recombination as well as in transcriptional and translational control. This is Integration host factor subunit beta from Chromobacterium violaceum (strain ATCC 12472 / DSM 30191 / JCM 1249 / CCUG 213 / NBRC 12614 / NCIMB 9131 / NCTC 9757 / MK).